Consider the following 436-residue polypeptide: Histidinol dehydrogenase (436 aa).

Residues S237, Q259, and H262 each coordinate substrate. The Zn(2+) site is built by Q259 and H262. Active-site proton acceptor residues include E327 and H328. H328, D361, E415, and H420 together coordinate substrate. D361 provides a ligand contact to Zn(2+). H420 serves as a coordination point for Zn(2+).

This sequence belongs to the histidinol dehydrogenase family. Zn(2+) serves as cofactor.

The catalysed reaction is L-histidinol + 2 NAD(+) + H2O = L-histidine + 2 NADH + 3 H(+). The protein operates within amino-acid biosynthesis; L-histidine biosynthesis; L-histidine from 5-phospho-alpha-D-ribose 1-diphosphate: step 9/9. Functionally, catalyzes the sequential NAD-dependent oxidations of L-histidinol to L-histidinaldehyde and then to L-histidine. The polypeptide is Histidinol dehydrogenase (Helicobacter hepaticus (strain ATCC 51449 / 3B1)).